Consider the following 360-residue polypeptide: UDP-N-acetylglucosamine--N-acetylmuramyl-(pentapeptide) pyrophosphoryl-undecaprenol N-acetylglucosamine transferase (360 aa).

Positions 198 and 289 each coordinate UDP-N-acetyl-alpha-D-glucosamine.

This sequence belongs to the glycosyltransferase 28 family. MurG subfamily.

It is found in the cell membrane. It catalyses the reaction Mur2Ac(oyl-L-Ala-gamma-D-Glu-L-Lys-D-Ala-D-Ala)-di-trans,octa-cis-undecaprenyl diphosphate + UDP-N-acetyl-alpha-D-glucosamine = beta-D-GlcNAc-(1-&gt;4)-Mur2Ac(oyl-L-Ala-gamma-D-Glu-L-Lys-D-Ala-D-Ala)-di-trans,octa-cis-undecaprenyl diphosphate + UDP + H(+). The protein operates within cell wall biogenesis; peptidoglycan biosynthesis. In terms of biological role, cell wall formation. Catalyzes the transfer of a GlcNAc subunit on undecaprenyl-pyrophosphoryl-MurNAc-pentapeptide (lipid intermediate I) to form undecaprenyl-pyrophosphoryl-MurNAc-(pentapeptide)GlcNAc (lipid intermediate II). In Streptococcus pyogenes serotype M49 (strain NZ131), this protein is UDP-N-acetylglucosamine--N-acetylmuramyl-(pentapeptide) pyrophosphoryl-undecaprenol N-acetylglucosamine transferase.